The primary structure comprises 123 residues: Large ribosomal subunit protein uL14c (123 aa).

This sequence belongs to the universal ribosomal protein uL14 family. In terms of assembly, part of the 50S ribosomal subunit.

The protein resides in the plastid. Its subcellular location is the chloroplast. Functionally, binds to 23S rRNA. This Brachypodium distachyon (Purple false brome) protein is Large ribosomal subunit protein uL14c.